The following is a 156-amino-acid chain: Small ribosomal subunit protein uS7 (156 aa).

Belongs to the universal ribosomal protein uS7 family. In terms of assembly, part of the 30S ribosomal subunit. Contacts proteins S9 and S11.

One of the primary rRNA binding proteins, it binds directly to 16S rRNA where it nucleates assembly of the head domain of the 30S subunit. Is located at the subunit interface close to the decoding center, probably blocks exit of the E-site tRNA. In Lachnospira eligens (strain ATCC 27750 / DSM 3376 / VPI C15-48 / C15-B4) (Eubacterium eligens), this protein is Small ribosomal subunit protein uS7.